Consider the following 253-residue polypeptide: UPF0246 protein lhv_1883 (253 aa).

Belongs to the UPF0246 family.

The sequence is that of UPF0246 protein lhv_1883 from Lactobacillus helveticus (strain DPC 4571).